The sequence spans 322 residues: MMPVDDLQEIPLSKDTTEKSKHTVRAAGAVLWRDASEHGGTTGHPATVEVAVIHRPRYDDWSLPKGKLDQGETEPVAAAREIHEETGHTAVLGRRLGRVTYPIPQGTKRVWYWAAKSTGGDFSPNDEVDKLVWLPVDAAMDQLQYPDDRKVLRRFVKRPVDTKTVLVVRHGTAGRRSRYKGDDRKRPLDKRGRAQAEALVAQLMAFGATTLYAADRVRCHQTIEPLAQELDQLIHNEPLLTEEAYAADHKAARKRLLEIAGRPGNPVICTQGKVIPGLIEWWCERAKVRPETTGNRKGSTWVLSLSDGELVGADYLSPPDEK.

The interval 1–21 (MMPVDDLQEIPLSKDTTEKSK) is disordered. The region spanning 22–156 (HTVRAAGAVL…DDRKVLRRFV (135 aa)) is the Nudix hydrolase domain. Residues 55 to 58 (RPRY), Asp-60, and 65 to 67 (KGK) each bind substrate. Positions 65, 81, and 85 each coordinate Mg(2+). A Nudix box motif is present at residues 66–87 (GKLDQGETEPVAAAREIHEETG). Residues Tyr-101, Lys-108, Glu-127, and Tyr-145 each contribute to the substrate site. Position 127 (Glu-127) interacts with Mg(2+).

The protein belongs to the Nudix hydrolase family. As to quaternary structure, forms head-to-tail homodimers. It depends on Mg(2+) as a cofactor.

The enzyme catalyses 8-oxo-dGTP + H2O = 8-oxo-dGDP + phosphate + H(+). The catalysed reaction is 8-oxo-GTP + H2O = 8-oxo-GDP + phosphate + H(+). It catalyses the reaction 8-oxo-dGDP + H2O = 8-oxo-dGMP + phosphate + H(+). It carries out the reaction 8-oxo-GDP + H2O = 8-oxo-GMP + phosphate + H(+). The enzyme catalyses P(1),P(6)-bis(5'-adenosyl) hexaphosphate + H2O = 2 ATP + 2 H(+). The catalysed reaction is P(1),P(5)-bis(5'-adenosyl) pentaphosphate + H2O = ADP + ATP + 2 H(+). It catalyses the reaction P(1),P(4)-bis(5'-adenosyl) tetraphosphate + H2O = AMP + ATP + 2 H(+). Ap4A hydrolysis is inhibited by fluoride ions. Functionally, catalyzes the conversion of 8-oxo-dGTP to 8-oxo-dGDP, and 8-oxo-GTP to 8-oxo-GDP. At high enzyme concentrations, can also catalyze the conversion of 8-oxo-dGDP to 8-oxo-dGMP, and 8-oxo-GDP to 8-oxo-GMP. In addition, catalyzes the hydrolysis of the diadenosine polyphosphates diadenosine hexaphosphate (Ap6A), diadenosine pentaphosphate (Ap5A) and diadenosine tetraphosphate (Ap4A). The protein is 8-oxo-(d)GTP phosphatase of Mycolicibacterium smegmatis (strain ATCC 700084 / mc(2)155) (Mycobacterium smegmatis).